Consider the following 53-residue polypeptide: Zinc metalloproteinase-disintegrin-like alborhagin (53 aa).

Belongs to the venom metalloproteinase (M12B) family. P-III subfamily. P-IIIb sub-subfamily. As to quaternary structure, monomer. Zn(2+) serves as cofactor. In terms of processing, contains numerous disulfide bonds. Glycosylated. Expressed by the venom gland.

The protein resides in the secreted. Its activity is regulated as follows. Alborhagin-induced platelet aggregation, but not shape change, is inhibited by EDTA, suggesting that the platelet activation (shape change) is independent of divalent cation or metalloproteinase activity. Induces platelet activation and glycoprotein VI (GP6)-dependent platelet aggregation. Induces ectodomain cleavage of GP6 by activating endogenous platelet metalloproteinases (probably ADAM10). Has fibrinogenolytic activity against the alpha chain of fibrinogen (FGA). Recognizes distinct binding sites as convulxin, since alborhagin has minimal effect on convulxin binding to GPVI-expressing cells. In terms of biological role, disintegrin alborhagin-C: 42 kDa fragment of alborhagin autoproteolysed that does not show platelet activation. This chain is Zinc metalloproteinase-disintegrin-like alborhagin, found in Trimeresurus albolabris (White-lipped pit viper).